Here is a 237-residue protein sequence, read N- to C-terminus: Survival of motor neuron-related-splicing factor 30 (237 aa).

Residues 52–69 (SQPAEGTTSTKSSETVAP) are compositionally biased toward polar residues. 2 disordered regions span residues 52-73 (SQPA…SHSW) and 149-198 (REYK…RSIF). The Tudor domain maps to 72–132 (SWRVGDHCMA…KKVEEGRIRD (61 aa)). Residues 142–160 (KELQAEQREYKKKKAQKKV) carry the Nuclear localization signal motif. Positions 151–161 (YKKKKAQKKVQ) are enriched in basic residues. Residues 162-175 (RMKELEQEREDQKS) are compositionally biased toward basic and acidic residues. The span at 176-185 (KWQQFNNKAY) shows a compositional bias: polar residues.

The protein belongs to the SMN family. As to quaternary structure, associates with spliceosomes.

It is found in the nucleus speckle. It localises to the nucleus. The protein resides in the cajal body. Its function is as follows. Involved in spliceosome assembly. This Danio rerio (Zebrafish) protein is Survival of motor neuron-related-splicing factor 30 (smndc1).